Reading from the N-terminus, the 655-residue chain is Very long-chain specific acyl-CoA dehydrogenase, mitochondrial (655 aa).

The transit peptide at 1–40 directs the protein to the mitochondrion; sequence MQSARMTPSVGRQLLRLGARSSRSAALQGQPRPTSAQRLY. The tract at residues 1–70 is disordered; it reads MQSARMTPSV…TREKPARAES (70 aa). Over residues 21–37 the composition is skewed to polar residues; sequence SSRSAALQGQPRPTSAQ. The segment at 41 to 482 is catalytic; it reads ASEATQAVLE…ALQGCMDKGK (442 aa). Lys51 carries the N6-acetyllysine modification. The span at 60–70 shows a compositional bias: basic and acidic residues; that stretch reads STREKPARAES. An N6-acetyllysine; alternate mark is found at Lys71 and Lys127. An N6-succinyllysine; alternate mark is found at Lys71 and Lys127. The residue at position 195 (Lys195) is an N6-succinyllysine. Residue 214 to 223 coordinates FAD; that stretch reads FCLTEPSSGS. Cys237 carries the post-translational modification S-nitrosocysteine. Lys239 bears the N6-acetyllysine; alternate mark. The residue at position 239 (Lys239) is an N6-succinyllysine; alternate. Position 249 to 251 (249 to 251) interacts with FAD; that stretch reads WIS. Lys268 carries the N6-succinyllysine modification. N6-acetyllysine; alternate occurs at positions 276 and 278. 2 positions are modified to N6-succinyllysine; alternate: Lys276 and Lys278. Lys298 and Lys316 each carry N6-acetyllysine. Lys331 is modified (N6-acetyllysine; alternate). Position 331 is an N6-succinyllysine; alternate (Lys331). Lys372 carries the post-translational modification N6-succinyllysine. 461–463 lines the substrate pocket; it reads FEG. The Proton acceptor role is filled by Glu462. 464–466 serves as a coordination point for FAD; that stretch reads TND. Lys482 bears the N6-acetyllysine; alternate mark. Lys482 carries the N6-succinyllysine; alternate modification. The membrane-anchoring stretch occupies residues 483–516; the sequence is ELTGLGNALKNPLGNVGLLIGEASKQLRRRTGIG. A phosphoserine mark is found at Ser517 and Ser522. The residue at position 550 (Lys550) is an N6-acetyllysine. Position 556 is an N6-acetyllysine; alternate (Lys556). An N6-succinyllysine; alternate modification is found at Lys556. FAD is bound at residue Gln562. Lys639 carries the post-translational modification N6-succinyllysine.

It belongs to the acyl-CoA dehydrogenase family. In terms of assembly, homodimer. Homodimerizes after import into the mitochondrion. Requires FAD as cofactor. In terms of processing, S-nitrosylation at Cys-237 in liver improves catalytic efficiency. In terms of tissue distribution, widely expressed (at protein level).

It localises to the mitochondrion inner membrane. It catalyses the reaction a very-long-chain 2,3-saturated fatty acyl-CoA + oxidized [electron-transfer flavoprotein] + H(+) = a very-long-chain (2E)-enoyl-CoA + reduced [electron-transfer flavoprotein]. The enzyme catalyses dodecanoyl-CoA + oxidized [electron-transfer flavoprotein] + H(+) = (2E)-dodecenoyl-CoA + reduced [electron-transfer flavoprotein]. It carries out the reaction tetradecanoyl-CoA + oxidized [electron-transfer flavoprotein] + H(+) = (2E)-tetradecenoyl-CoA + reduced [electron-transfer flavoprotein]. The catalysed reaction is oxidized [electron-transfer flavoprotein] + hexadecanoyl-CoA + H(+) = (2E)-hexadecenoyl-CoA + reduced [electron-transfer flavoprotein]. It catalyses the reaction octadecanoyl-CoA + oxidized [electron-transfer flavoprotein] + H(+) = (2E)-octadecenoyl-CoA + reduced [electron-transfer flavoprotein]. The enzyme catalyses eicosanoyl-CoA + oxidized [electron-transfer flavoprotein] + H(+) = (2E)-eicosenoyl-CoA + reduced [electron-transfer flavoprotein]. It carries out the reaction docosanoyl-CoA + oxidized [electron-transfer flavoprotein] + H(+) = (2E)-docosenoyl-CoA + reduced [electron-transfer flavoprotein]. The catalysed reaction is tetracosanoyl-CoA + oxidized [electron-transfer flavoprotein] + H(+) = (2E)-tetracosenoyl-CoA + reduced [electron-transfer flavoprotein]. It participates in lipid metabolism; mitochondrial fatty acid beta-oxidation. Its function is as follows. Very long-chain specific acyl-CoA dehydrogenase is one of the acyl-CoA dehydrogenases that catalyze the first step of mitochondrial fatty acid beta-oxidation, an aerobic process breaking down fatty acids into acetyl-CoA and allowing the production of energy from fats. The first step of fatty acid beta-oxidation consists in the removal of one hydrogen from C-2 and C-3 of the straight-chain fatty acyl-CoA thioester, resulting in the formation of trans-2-enoyl-CoA. Among the different mitochondrial acyl-CoA dehydrogenases, very long-chain specific acyl-CoA dehydrogenase acts specifically on acyl-CoAs with saturated 12 to 24 carbons long primary chains. This chain is Very long-chain specific acyl-CoA dehydrogenase, mitochondrial, found in Rattus norvegicus (Rat).